The following is a 223-amino-acid chain: MSPDTLIIRQLGLQPWAPVSLAMHQFTDQRNDETPDEIWLVEHLPVFTQGQAGKSEHLLMPGDIPVMQSDRGGQVTYHGPGQQVMYVMINLKRRRVGVRQLVTAIEQTVVDTLAAFSVSANARSDAPGVYVDGKKICSLGLRIRQGCSFHGLALNVDMDLSPFQRINPCGYAGLEMTQLTQQHPGATLAAVQPLLIAHFAHHLAITDIDWREDPSLPFSSLRH.

The 176-residue stretch at 32–207 (DETPDEIWLV…HFAHHLAITD (176 aa)) folds into the BPL/LPL catalytic domain. Substrate contacts are provided by residues 71–78 (RGGQVTYH), 138–140 (SLG), and 151–153 (GLA). C169 functions as the Acyl-thioester intermediate in the catalytic mechanism.

Belongs to the LipB family.

Its subcellular location is the cytoplasm. It carries out the reaction octanoyl-[ACP] + L-lysyl-[protein] = N(6)-octanoyl-L-lysyl-[protein] + holo-[ACP] + H(+). The protein operates within protein modification; protein lipoylation via endogenous pathway; protein N(6)-(lipoyl)lysine from octanoyl-[acyl-carrier-protein]: step 1/2. Functionally, catalyzes the transfer of endogenously produced octanoic acid from octanoyl-acyl-carrier-protein onto the lipoyl domains of lipoate-dependent enzymes. Lipoyl-ACP can also act as a substrate although octanoyl-ACP is likely to be the physiological substrate. This Erwinia tasmaniensis (strain DSM 17950 / CFBP 7177 / CIP 109463 / NCPPB 4357 / Et1/99) protein is Octanoyltransferase.